Reading from the N-terminus, the 363-residue chain is NADH-quinone oxidoreductase subunit H (363 aa).

Helical transmembrane passes span 29–49 (VLKI…YVVW), 62–82 (GPMY…KLLF), 96–116 (FIIA…VVPF), 127–147 (VGLL…ILAG), 163–183 (AAQV…VMIA), 202–222 (FFDW…VSGV), 239–257 (IVAG…LFFL), 264–286 (ILVS…QGWV), 299–319 (TGGW…YIWF), and 339–359 (FIPL…YGVI).

This sequence belongs to the complex I subunit 1 family. In terms of assembly, NDH-1 is composed of 14 different subunits. Subunits NuoA, H, J, K, L, M, N constitute the membrane sector of the complex.

It is found in the cell inner membrane. It carries out the reaction a quinone + NADH + 5 H(+)(in) = a quinol + NAD(+) + 4 H(+)(out). NDH-1 shuttles electrons from NADH, via FMN and iron-sulfur (Fe-S) centers, to quinones in the respiratory chain. The immediate electron acceptor for the enzyme in this species is believed to be ubiquinone. Couples the redox reaction to proton translocation (for every two electrons transferred, four hydrogen ions are translocated across the cytoplasmic membrane), and thus conserves the redox energy in a proton gradient. This subunit may bind ubiquinone. The polypeptide is NADH-quinone oxidoreductase subunit H (Xanthomonas campestris pv. campestris (strain 8004)).